The primary structure comprises 396 residues: Elongation factor Tu 1 (396 aa).

In terms of domain architecture, tr-type G spans 10 to 206 (KPHINVGTIG…AMDAHIPQPE (197 aa)). The segment at 19 to 26 (GHVDHGKT) is G1. GTP is bound at residue 19 to 26 (GHVDHGKT). A Mg(2+)-binding site is contributed by Thr26. The interval 60–64 (GITIA) is G2. The tract at residues 81–84 (DCPG) is G3. Residues 81-85 (DCPGH) and 136-139 (NKAD) each bind GTP. A G4 region spans residues 136–139 (NKAD). Residues 174–176 (SAL) form a G5 region.

The protein belongs to the TRAFAC class translation factor GTPase superfamily. Classic translation factor GTPase family. EF-Tu/EF-1A subfamily. As to quaternary structure, monomer.

The protein localises to the cytoplasm. It catalyses the reaction GTP + H2O = GDP + phosphate + H(+). Functionally, GTP hydrolase that promotes the GTP-dependent binding of aminoacyl-tRNA to the A-site of ribosomes during protein biosynthesis. In Halorhodospira halophila (strain DSM 244 / SL1) (Ectothiorhodospira halophila (strain DSM 244 / SL1)), this protein is Elongation factor Tu 1.